Consider the following 831-residue polypeptide: Sodium/hydrogen exchanger 3 (831 aa).

An N-terminal signal peptide occupies residues 1 to 28 (MWHPALGPGWKPLLALALALTSLRGVRG). Over 29–48 (IEEEPNSGGSFQIVTFKWHH) the chain is Extracellular. A helical membrane pass occupies residues 49–71 (VQDPYIIALWILVASLAKIVFHL). Residues 72 to 79 (SHKVTSVV) lie on the Cytoplasmic side of the membrane. Residues 80-99 (PESALLIVLGLVLGGIVWAA) form a helical membrane-spanning segment. Residues 100 to 108 (DHIASFTLT) lie on the Extracellular side of the membrane. The chain crosses the membrane as a helical span at residues 109 to 126 (PTLFFFYLLPPIVLDAGY). Topologically, residues 127 to 129 (FMP) are cytoplasmic. A helical transmembrane segment spans residues 130–165 (NRLFFGNLGTILLYAVIGTIWNAATTGLSLYGVFLS). Residues glycine 135, glycine 138, and threonine 139 each coordinate a 1,2-diacyl-sn-glycero-3-phospho-(1D-myo-inositol). At 166–178 (GLMGELKIGLLDF) the chain is on the extracellular side. A helical membrane pass occupies residues 179-200 (LLFGSLIAAVDPVAVLAVFEEV). Topologically, residues 201–202 (HV) are cytoplasmic. The helical transmembrane segment at 203–234 (NEVLFIIVFGESLLNDAVTVVLYNVFESFVTL) threads the bilayer. The Extracellular portion of the chain corresponds to 235-241 (GGDAVTG). Residues 242 to 276 (VDCVKGIVSFFVVSLGGTLVGVIFAFLLSLVTRFT) traverse the membrane as a helical segment. The Cytoplasmic portion of the chain corresponds to 277–278 (KH). Residues 279-301 (VRIIEPGFVFVISYLSYLTSEML) form a helical membrane-spanning segment. Residues 302–303 (SL) are Extracellular-facing. The helical transmembrane segment at 304–320 (SAILAITFCGICCQKYV) threads the bilayer. Residues 321–327 (KANISEQ) are Cytoplasmic-facing. The chain crosses the membrane as a helical span at residues 328 to 356 (SATTVRYTMKMLASGAETIIFMFLGISAV). The Extracellular segment spans residues 357 to 364 (DPVIWTWN). A helical membrane pass occupies residues 365 to 386 (TAFVLLTLVFISVYRAIGVVLQ). The Cytoplasmic portion of the chain corresponds to 387-399 (TWILNRYRMVQLE). Methionine 395 contributes to the a 1,2-diacyl-sn-glycero-3-phospho-(1D-myo-inositol) binding site. A helical transmembrane segment spans residues 400–423 (TIDQVVMSYGGLRGAVAYALVVLL). At 424–430 (DEKKVKE) the chain is on the extracellular side. A helical transmembrane segment spans residues 431 to 464 (KNLFVSTTLIVVFFTVIFQGLTIKPLVQWLKVKR). At 465–831 (SEQREPKLNE…QPASPESTHM (367 aa)) the chain is on the cytoplasmic side. 3 residues coordinate a 1,2-diacyl-sn-glycero-3-phospho-(1D-myo-inositol): glutamine 494, isoleucine 495, and histidine 497. Serine 552 and serine 560 each carry phosphoserine. Positions 573 to 587 (RPSTVEASVSYFLRE) are interaction with EZR. Positions 588 to 665 (NVSAVCLDMQ…RKRLESFKSA (78 aa)) are interaction with NHERF4. The interaction with AHCYL1 stretch occupies residues 589 to 693 (VSAVCLDMQS…AQKRRNSSIP (105 aa)). A phosphoserine mark is found at serine 590 and serine 605. The residue at position 661 (serine 661) is a Phosphoserine; by SGK1. 3 positions are modified to phosphoserine: serine 716, serine 807, and serine 810. The tract at residues 808-831 (VDSFLQADGPEEQLQPASPESTHM) is disordered. Positions 822–831 (QPASPESTHM) are enriched in polar residues.

Belongs to the monovalent cation:p,roton antiporter 1 (CPA1) transporter (TC 2.A.36) family. Homodimer. Found in the forms of complex and dynamic macromolecular complexes. Binds NHERF1 and NHERF2. Interacts with NHERF4 and interactions decrease in response to elevated calcium ion levels. Interacts with PDZK1 (via C-terminal PDZ domain). Interacts with CHP1; this interaction increases trafficking and activity at the plasma membrane of SLC9A3. Interacts with CHP2 and SHANK2. Interacts with AHCYL1; the interaction is required for SLC9A3 activity. Interacts with EZR; interaction targets SLC9A3 to the apical membrane. Interacts with SNX27 (via PDZ domains); directs SLC9A3 membrane insertion from early endosomes to the plasma membrane. Phosphorylated by PRKACA at Ser-552 and Ser-605, which inhibits activity. Phosphorylation of Ser-605 is essential for cAMP-mediated inhibition of SLC9A3. Phosphorylation at Ser-661 by SGK1 is associated with increased abundance at the cell membrane. Phosphorylation at Ser-716 by CSNK2A1 regulates SLC9A3 activity through the formation of multiple signaling complexes. Most abundant in colon and small intestine, followed by kidney and stomach. In kidney, expressed in proximal tubules and outer medulla (at protein level).

It is found in the apical cell membrane. Its subcellular location is the cell membrane. It localises to the recycling endosome membrane. The protein resides in the early endosome membrane. The enzyme catalyses Na(+)(in) + H(+)(out) = Na(+)(out) + H(+)(in). With respect to regulation, seems to switch between active and inactive modes in response to various stimuli. Activated directly or indirectly by membrane phosphatidylinositol (PIs). Regulated by a variety of auxiliary proteins, which facilitate the maturation, cell surface expression and function of the transporter. Inhibited specifically by the drug tenapanor. Plasma membrane Na(+)/H(+) antiporter. Exchanges intracellular H(+) ions for extracellular Na(+) in 1:1 stoichiometry, playing a key role in salt and fluid absorption and pH homeostasis. Major apical Na(+)/H(+) exchanger in kidney and intestine playing an important role in renal and intestine Na(+) absorption and blood pressure regulation. The protein is Sodium/hydrogen exchanger 3 (Slc9a3) of Rattus norvegicus (Rat).